The following is an 865-amino-acid chain: DNA-directed RNA polymerase subunit Rpo1N (865 aa).

Zn(2+)-binding residues include Cys60, Cys63, Cys70, His73, Cys100, Cys103, Cys146, and Cys149. Asp451, Asp453, and Asp455 together coordinate Mg(2+). The tract at residues 500–531 (EHTSSQGKRLFSVRSRPPDPQEGRAPPPDREG) is disordered. The span at 515–531 (RPPDPQEGRAPPPDREG) shows a compositional bias: basic and acidic residues.

Belongs to the RNA polymerase beta' chain family. As to quaternary structure, part of the RNA polymerase complex. Mg(2+) is required as a cofactor. The cofactor is Zn(2+).

It is found in the cytoplasm. The catalysed reaction is RNA(n) + a ribonucleoside 5'-triphosphate = RNA(n+1) + diphosphate. Functionally, DNA-dependent RNA polymerase (RNAP) catalyzes the transcription of DNA into RNA using the four ribonucleoside triphosphates as substrates. Forms the clamp head domain. This Methanothermobacter thermautotrophicus (strain Winter) (Methanobacterium thermoautotrophicum) protein is DNA-directed RNA polymerase subunit Rpo1N.